Here is a 354-residue protein sequence, read N- to C-terminus: Mating-type protein MAT-1 (354 aa).

The segment at residues 60-117 (KAKKALNAFVGFRCYYIAIPAFKQWPMKKLSNLISLLWDRDPNKSLWSLMAKAWSNIR) is a DNA-binding region (alpha box).

Belongs to the MATALPHA1 family.

The protein resides in the nucleus. Mating type proteins are sequence specific DNA-binding proteins that act as master switches in fungal differentiation by controlling gene expression in a cell type-specific fashion. Transcriptional activator that induces the transcription of alpha-specific genes. In Cochliobolus cymbopogonis (Curvularia cymbopogonis), this protein is Mating-type protein MAT-1 (MAT1).